A 364-amino-acid chain; its full sequence is uncharacterized protein (364 aa).

3 consecutive transmembrane segments (helical) span residues 41 to 61 (NIFTHIFLFLLIIVSGLFFGL), 298 to 318 (VIYILLFLIIDSLILLVITYM), and 329 to 349 (LLFYIFGLLSFNPIVWASIII).

Its subcellular location is the membrane. This is an uncharacterized protein from Mycoplasma capricolum subsp. capricolum (strain California kid / ATCC 27343 / NCTC 10154).